A 128-amino-acid chain; its full sequence is Small ribosomal subunit protein eS8 (128 aa).

The protein belongs to the eukaryotic ribosomal protein eS8 family. Part of the 30S ribosomal subunit.

The chain is Small ribosomal subunit protein eS8 from Methanococcus maripaludis (strain C7 / ATCC BAA-1331).